An 865-amino-acid polypeptide reads, in one-letter code: Armadillo repeat-containing protein 2 (865 aa).

Disordered regions lie at residues 39-75 (TVRT…FSVH) and 214-243 (SVPF…DQSR). Polar residues predominate over residues 60–75 (SSRTPENRPPSSFSVH). 12 ARM repeats span residues 261 to 300 (IEVD…HALE), 303 to 343 (NMLG…ALKV), 362 to 402 (EKND…TIKF), 407 to 448 (PEFL…HLLV), 461 to 502 (PLAR…KLTS), 505 to 546 (DCCV…NLTA), 550 to 587 (QARE…GEGD), 589 to 614 (RPEA…NLAI), 617 to 660 (GVGP…NLSY), 662 to 703 (KVKN…NLSQ), 705 to 744 (HDIC…NLTV), and 746 to 788 (RDKR…NFSE).

Functionally, required for sperm flagellum axoneme organization and function. Involved in axonemal central pair complex assembly and/or stability. The polypeptide is Armadillo repeat-containing protein 2 (Bos taurus (Bovine)).